A 352-amino-acid chain; its full sequence is C-C chemokine receptor type 5 (352 aa).

Residues 1–30 (MDYQVSSPTYDIDYYTSEPCQKVNVKQIAA) lie on the Extracellular side of the membrane. Residue tyrosine 3 is modified to Sulfotyrosine. O-linked (GalNAc...) serine glycans are attached at residues serine 6 and serine 7. Sulfotyrosine is present on residues tyrosine 10, tyrosine 14, and tyrosine 15. 2 disulfides stabilise this stretch: cysteine 20/cysteine 269 and cysteine 101/cysteine 178. Residues 31–58 (RLLPPLYSLVFIFGFVGNILVVLILINC) form a helical membrane-spanning segment. The Cytoplasmic segment spans residues 59–68 (KRLKSMTDIY). Residues 69–89 (LLNLAISDLFFLLTVPFWAHY) traverse the membrane as a helical segment. Over 90–102 (AAAQWDFGNTMCQ) the chain is Extracellular. A helical transmembrane segment spans residues 103-124 (LLTGLYFIGFFSGIFFIILLTI). The Cytoplasmic segment spans residues 125–141 (DRYLAIVHAVFALKART). Residues 142-166 (VTFGVVTSVITWVVAVFASLPGIIF) traverse the membrane as a helical segment. Over 167-198 (TRSQREGLHYTCSSHFPYSQYQFWKNFQTLKI) the chain is Extracellular. The helical transmembrane segment at 199 to 218 (VILGLVLPLLIMVICYSGIL) threads the bilayer. At 219–235 (KTLLRCRNEKKRHRAVR) the chain is on the cytoplasmic side. Residues 236 to 260 (LIFTIMIVYFLFWAPYNIVLLLNTF) traverse the membrane as a helical segment. Topologically, residues 261 to 277 (QEFFGLNNCSSSNRLDQ) are extracellular. Residues 278–301 (AMQVTETLGMTHCCINPIIYAFVG) traverse the membrane as a helical segment. At 302–352 (EKFRNYLLVFFQKHIAKRFCKCCSIFQQEAPERASSVYTRSTGEHEISVGL) the chain is on the cytoplasmic side. Residues cysteine 321, cysteine 323, and cysteine 324 are each lipidated (S-palmitoyl cysteine). Residues serine 336, serine 337, serine 342, and serine 349 each carry the phosphoserine; by BARK1 modification.

This sequence belongs to the G-protein coupled receptor 1 family. In terms of assembly, interacts with PRAF2. Efficient ligand binding to CCL3/MIP-1alpha and CCL4/MIP-1beta requires sulfation, O-glycosylation and sialic acid modifications. Glycosylation on Ser-6 is required for efficient binding of CCL4. Interacts with GRK2. Interacts with ARRB1 and ARRB2. Interacts with CNIH4. Interacts with S100A4; this interaction stimulates T-lymphocyte chemotaxis. Sulfated on at least 2 of the N-terminal tyrosines. Sulfation is required for efficient binding of the chemokines, CCL3 and CCL4. Post-translationally, palmitoylation in the C-terminal is important for cell surface expression. In terms of processing, phosphorylation on serine residues in the C-terminal is stimulated by binding CC chemokines especially by APO-RANTES. O-glycosylated, but not N-glycosylated. Ser-6 appears to be the major site even if Ser-7 may be also O-glycosylated. Also sialylated glycans present which contribute to chemokine binding. Thr-16 and Ser-17 may also be glycosylated and, if so, with small moieties such as a T-antigen.

The protein resides in the cell membrane. Receptor for a number of inflammatory CC-chemokines including CCL3/MIP-1-alpha, CCL4/MIP-1-beta and RANTES and subsequently transduces a signal by increasing the intracellular calcium ion level. May play a role in the control of granulocytic lineage proliferation or differentiation. Participates in T-lymphocyte migration to the infection site by acting as a chemotactic receptor. This chain is C-C chemokine receptor type 5 (CCR5), found in Pygathrix nemaeus (Red-shanked douc langur).